The following is a 409-amino-acid chain: Phosphoglycerate kinase (409 aa).

Residues 23–25 (DIN), 63–66 (HQSR), Arg-120, and Arg-160 each bind substrate. ATP is bound by residues Glu-333 and 359-362 (GGHL).

It belongs to the phosphoglycerate kinase family. Monomer.

It is found in the cytoplasm. It catalyses the reaction (2R)-3-phosphoglycerate + ATP = (2R)-3-phospho-glyceroyl phosphate + ADP. The protein operates within carbohydrate degradation; glycolysis; pyruvate from D-glyceraldehyde 3-phosphate: step 2/5. The polypeptide is Phosphoglycerate kinase (pgk) (Methanobacterium bryantii).